The following is a 410-amino-acid chain: 3-phosphoshikimate 1-carboxyvinyltransferase (410 aa).

3-phosphoshikimate is bound by residues K20, S21, and R25. K20 lines the phosphoenolpyruvate pocket. The phosphoenolpyruvate site is built by G87 and R115. The 3-phosphoshikimate site is built by S157, S158, Q159, S183, D293, and K320. Position 159 (Q159) interacts with phosphoenolpyruvate. The Proton acceptor role is filled by D293. The phosphoenolpyruvate site is built by R324, R365, and K391.

The protein belongs to the EPSP synthase family. As to quaternary structure, monomer.

It localises to the cytoplasm. It carries out the reaction 3-phosphoshikimate + phosphoenolpyruvate = 5-O-(1-carboxyvinyl)-3-phosphoshikimate + phosphate. Its pathway is metabolic intermediate biosynthesis; chorismate biosynthesis. Catalyzes the transfer of the enolpyruvyl moiety of phosphoenolpyruvate (PEP) to the 5-hydroxyl of shikimate-3-phosphate (S3P) to produce enolpyruvyl shikimate-3-phosphate and inorganic phosphate. The chain is 3-phosphoshikimate 1-carboxyvinyltransferase from Thermoplasma volcanium (strain ATCC 51530 / DSM 4299 / JCM 9571 / NBRC 15438 / GSS1).